Consider the following 242-residue polypeptide: uncharacterized protein (242 aa).

Positions 1–17 (MKFSPAYLLAFAPIVAA) are cleaved as a signal peptide. Asparagine 47, asparagine 86, asparagine 122, asparagine 159, and asparagine 178 each carry an N-linked (GlcNAc...) asparagine glycan. Residues 176–214 (NANESTADGQAQSGSSGSSSDSGSHSGHSSATQTSSTTA) form a disordered region. Positions 180–214 (STADGQAQSGSSGSSSDSGSHSGHSSATQTSSTTA) are enriched in low complexity. Alanine 218 is lipidated: GPI-like-anchor amidated alanine. The propeptide at 219–242 (GAVALETAAWGILGAAVVGGLAVL) is removed in mature form.

The GPI-like anchor contains a phosphoceramide lipid group. The anchor position has not been determined.

The protein localises to the cell membrane. This is an uncharacterized protein from Aspergillus fumigatus (strain ATCC MYA-4609 / CBS 101355 / FGSC A1100 / Af293) (Neosartorya fumigata).